The sequence spans 269 residues: MTNNLDKLKIGNKSFNSRLMLGTGKYRTTQSAIASIEDSNCDIVTVAIRRLPVNLKNDNINFLNKLDWNKLWLLPNTAGSQTAEEAIRMAFLGHELACQVGQEDNFFVKLEVISDPKYLLPDPIGTLKAAEFLIRKGFTVLPYINADPMLALHLEDLGCATVMPLASPIGSGQGLNNLANIKIIIENASVPVIIDAGIGTPSEATQAMELGADGVLLNTAVAQSKNPSQMASAMRLGVQAGRLAYLAGRMEKKYYADASSPLEQISKLI.

The Schiff-base intermediate with DXP role is filled by K109. 1-deoxy-D-xylulose 5-phosphate-binding positions include G170, 196–197 (AG), and 218–219 (NT).

The protein belongs to the ThiG family. As to quaternary structure, homotetramer. Forms heterodimers with either ThiH or ThiS.

The protein resides in the plastid. Its subcellular location is the chloroplast. The catalysed reaction is [ThiS sulfur-carrier protein]-C-terminal-Gly-aminoethanethioate + 2-iminoacetate + 1-deoxy-D-xylulose 5-phosphate = [ThiS sulfur-carrier protein]-C-terminal Gly-Gly + 2-[(2R,5Z)-2-carboxy-4-methylthiazol-5(2H)-ylidene]ethyl phosphate + 2 H2O + H(+). It functions in the pathway cofactor biosynthesis; thiamine diphosphate biosynthesis. Functionally, catalyzes the rearrangement of 1-deoxy-D-xylulose 5-phosphate (DXP) to produce the thiazole phosphate moiety of thiamine. Sulfur is provided by the thiocarboxylate moiety of the carrier protein ThiS. In vitro, sulfur can be provided by H(2)S. This Phaeodactylum tricornutum (strain CCAP 1055/1) protein is Thiazole synthase.